A 742-amino-acid chain; its full sequence is Hapless 2 (742 aa).

Residues 1 to 19 (MKFLAFGLIYFHFCILNRC) form the signal peptide. Topologically, residues 20–540 (EYITSSTIQK…CYFSAGCIKE (521 aa)) are extracellular. Disulfide bonds link Cys-30-Cys-40, Cys-118-Cys-147, Cys-129-Cys-182, Cys-148-Cys-312, Cys-150-Cys-168, Cys-295-Cys-319, and Cys-431-Cys-470. Positions 152 to 179 (LSDILGMGNDLSRGKVCYALNLGAGSAT) are important for membrane fusion. The helical transmembrane segment at 541-561 (AFKSIASIAGVASALALVIFL) threads the bilayer. Residues 562-742 (AKNGYLVPII…STSPLYLLIE (181 aa)) lie on the Cytoplasmic side of the membrane.

This sequence belongs to the HAP2/GCS1 family.

The protein localises to the cell membrane. It is found in the cell junction. In terms of biological role, during fertilization, required for the formation of intercellular membrane pores and subsequent exchange of gametic pronuclei between cells. Probably initiates the formation of intercellular membrane pores by inserting part of its extracellular domain into the cell membrane of the adjoining cell in the mating pair. Mating requires the presence of HAP2 on at least one of the two cells. Mating efficiency is high when HAP2 is present on both cells, and is strongly reduced when HAP2 is present on only one of the two cells. The protein is Hapless 2 of Tetrahymena thermophila.